A 145-amino-acid polypeptide reads, in one-letter code: Transmembrane protein 170A (145 aa).

Residues 1–50 are Lumenal-facing; it reads MIEALIVGEMQDVQIGFVKQILSLNLVPRSNNTTCGNNTSLCDFSEMWYG. N-linked (GlcNAc...) asparagine glycans are attached at residues Asn31 and Asn37. A helical transmembrane segment spans residues 51–71; it reads VFLWAVVSSLIFHLPAALLAL. Over 72 to 81 the chain is Cytoplasmic; the sequence is ATLRRHKVAR. Residues 82-102 traverse the membrane as a helical segment; it reads FFPLGILLMGIIGPLFGGVLT. Residues 103-117 lie on the Lumenal side of the membrane; sequence SAAIAGVYKAAGKSM. The chain crosses the membrane as a helical span at residues 118-138; it reads FSLEALVFGVGQSLFIFIISF. Residues 139 to 145 lie on the Cytoplasmic side of the membrane; it reads LRILATL.

The protein belongs to the TMEM170 family.

It is found in the endoplasmic reticulum membrane. Its subcellular location is the nucleus envelope. Its function is as follows. May regulate membrane morphogenesis in the endoplasmic reticulum (ER) by promoting ER sheet formation at the expense of ER tubules. The protein is Transmembrane protein 170A (tmem170a) of Danio rerio (Zebrafish).